A 450-amino-acid chain; its full sequence is MSHSACPKPATARHSQALTGEIRIPGDKSISHRSFMFGGLASGKTRITGLLEGEDVINTGRAMQAMGARIRKEGDVWIINGVGNGCLLQPEAPLDFGNAGTGARLTMGLVGTYDMKTSFIGDASLSKRPMGRVLNPLREMGVQVEAAEGDRMPLTLIGPRTANPIAYRVPMASAQVKSAVLLAGLNTPGVTTVIEPVMTRDHTEKMLQGFGADLTVETDKDGVRHIRIVGQGKLTGQTIDVPGDPSSTAFPLVAALLVEGSDVTIRNVLMNPTRTGLILTLQEMGADIEIIDPRLAGGEDVADLRVKASKLKGVVVPPERAPSMIDEYPVLAIAASFAEGETVMDGLDELRVKESDRLAAVARGLEANGVDCTEGEMSLTVRGRPGGKGLGGGTVATHLDHRIAMSFLVMGLASEKPVTVDDSTMIATSFPEFMGMMAGLGAKIAESGAE.

3-phosphoshikimate contacts are provided by lysine 28, serine 29, and arginine 33. Lysine 28 provides a ligand contact to phosphoenolpyruvate. 2 residues coordinate phosphoenolpyruvate: glycine 100 and arginine 128. The 3-phosphoshikimate site is built by serine 173, glutamine 175, aspartate 326, and lysine 353. Glutamine 175 is a binding site for phosphoenolpyruvate. The active-site Proton acceptor is aspartate 326. Residues arginine 357 and arginine 402 each contribute to the phosphoenolpyruvate site.

The protein belongs to the EPSP synthase family. Monomer.

The protein localises to the cytoplasm. The enzyme catalyses 3-phosphoshikimate + phosphoenolpyruvate = 5-O-(1-carboxyvinyl)-3-phosphoshikimate + phosphate. The protein operates within metabolic intermediate biosynthesis; chorismate biosynthesis; chorismate from D-erythrose 4-phosphate and phosphoenolpyruvate: step 6/7. In terms of biological role, catalyzes the transfer of the enolpyruvyl moiety of phosphoenolpyruvate (PEP) to the 5-hydroxyl of shikimate-3-phosphate (S3P) to produce enolpyruvyl shikimate-3-phosphate and inorganic phosphate. This chain is 3-phosphoshikimate 1-carboxyvinyltransferase, found in Brucella melitensis biotype 2 (strain ATCC 23457).